We begin with the raw amino-acid sequence, 304 residues long: Acetylglutamate kinase (304 aa).

Residues 69 to 70, Arg-91, and Asn-202 each bind substrate; that span reads GG.

It belongs to the acetylglutamate kinase family. ArgB subfamily.

Its subcellular location is the cytoplasm. The catalysed reaction is N-acetyl-L-glutamate + ATP = N-acetyl-L-glutamyl 5-phosphate + ADP. Its pathway is amino-acid biosynthesis; L-arginine biosynthesis; N(2)-acetyl-L-ornithine from L-glutamate: step 2/4. In terms of biological role, catalyzes the ATP-dependent phosphorylation of N-acetyl-L-glutamate. The chain is Acetylglutamate kinase from Caulobacter sp. (strain K31).